Here is a 200-residue protein sequence, read N- to C-terminus: Holliday junction branch migration complex subunit RuvA (200 aa).

A domain I region spans residues 1–63; sequence MYAYIKGTLS…EDAQLLYGFI (63 aa). The tract at residues 64–142 is domain II; the sequence is NEEEKEMFLS…ITEENSDDLL (79 aa). The tract at residues 143–149 is flexible linker; that stretch reads QTQVNGN. A domain III region spans residues 150–200; sequence EQNQIISEALLALQALGYSKRELTKVEKSLNKHNVNSVDEAVKIGLQTLVS.

This sequence belongs to the RuvA family. In terms of assembly, homotetramer. Forms an RuvA(8)-RuvB(12)-Holliday junction (HJ) complex. HJ DNA is sandwiched between 2 RuvA tetramers; dsDNA enters through RuvA and exits via RuvB. An RuvB hexamer assembles on each DNA strand where it exits the tetramer. Each RuvB hexamer is contacted by two RuvA subunits (via domain III) on 2 adjacent RuvB subunits; this complex drives branch migration. In the full resolvosome a probable DNA-RuvA(4)-RuvB(12)-RuvC(2) complex forms which resolves the HJ.

The protein localises to the cytoplasm. The RuvA-RuvB-RuvC complex processes Holliday junction (HJ) DNA during genetic recombination and DNA repair, while the RuvA-RuvB complex plays an important role in the rescue of blocked DNA replication forks via replication fork reversal (RFR). RuvA specifically binds to HJ cruciform DNA, conferring on it an open structure. The RuvB hexamer acts as an ATP-dependent pump, pulling dsDNA into and through the RuvAB complex. HJ branch migration allows RuvC to scan DNA until it finds its consensus sequence, where it cleaves and resolves the cruciform DNA. This is Holliday junction branch migration complex subunit RuvA from Staphylococcus epidermidis (strain ATCC 35984 / DSM 28319 / BCRC 17069 / CCUG 31568 / BM 3577 / RP62A).